Consider the following 752-residue polypeptide: Protein SEY1 homolog 1 (752 aa).

At 1 to 674 (MIKNQGDRYH…QKHKQDFLQN (674 aa)) the chain is on the cytoplasmic side. Positions 40-265 (GKKYNIVSII…YEKNVRWSDM (226 aa)) constitute a GB1/RHD3-type G domain. 50–57 (GSQSTGKS) is a GTP binding site. A coiled-coil region spans residues 445–465 (NQLKSFVEAQLASFKQQLDNI). A helical membrane pass occupies residues 675–695 (IPKPFWFLLLFFMYDDVLRWM). Residues 696-698 (GNP) lie on the Lumenal side of the membrane. A helical membrane pass occupies residues 699–719 (LFLYPILIILCFIGFCIAIGL). Topologically, residues 720 to 752 (HSLPKLAFQTVFRTINQALLPLIFGGISKLKTS) are cytoplasmic.

This sequence belongs to the TRAFAC class dynamin-like GTPase superfamily. GB1/RHD3 GTPase family. RHD3 subfamily.

Its subcellular location is the endoplasmic reticulum membrane. Its function is as follows. Probable GTP-binding protein that may be involved in cell development. In Paramecium tetraurelia, this protein is Protein SEY1 homolog 1.